Consider the following 245-residue polypeptide: Phosphoadenosine 5'-phosphosulfate reductase (245 aa).

The active-site Nucleophile; cysteine thiosulfonate intermediate is the C239.

Belongs to the PAPS reductase family. CysH subfamily.

It is found in the cytoplasm. The catalysed reaction is [thioredoxin]-disulfide + sulfite + adenosine 3',5'-bisphosphate + 2 H(+) = [thioredoxin]-dithiol + 3'-phosphoadenylyl sulfate. It participates in sulfur metabolism; hydrogen sulfide biosynthesis; sulfite from sulfate: step 3/3. Functionally, catalyzes the formation of sulfite from phosphoadenosine 5'-phosphosulfate (PAPS) using thioredoxin as an electron donor. The protein is Phosphoadenosine 5'-phosphosulfate reductase of Baumannia cicadellinicola subsp. Homalodisca coagulata.